The sequence spans 160 residues: Baculoviral IAP repeat-containing protein 5.1-A (160 aa).

One copy of the BIR repeat lies at 27-97 (RLATFADWPF…KRSANCGFLS (71 aa)). Threonine 43 is modified (phosphothreonine; by CDK1). The Zn(2+) site is built by cysteine 66, cysteine 69, histidine 86, and cysteine 93.

This sequence belongs to the IAP family. As to quaternary structure, component of the CPC at least composed of survivin/birc5, incenp, cdca8/borealin and/or cdca9/dasra-A, and aurkb/aurora-B. Interacts directly with incenp (via N-terminus), and may weakly interact with aurkb (via N-terminus) to stabilize the complex. Interacts with GTP-bound ran in both the S and M phases of the cell cycle. Also found in a complex with ubiquitin-mediated signaling proteins including at least usp9x/xFAM, nploc4/npl4 and ufd1. In terms of processing, ubiquitination is required for centrosome-targeting.

Its subcellular location is the cytoplasm. It localises to the nucleus. The protein localises to the chromosome. It is found in the centromere. The protein resides in the cytoskeleton. Its subcellular location is the spindle. Its function is as follows. Component of the chromosomal passenger complex (CPC), a complex that acts as a key regulator of mitosis. The CPC complex has essential functions at the centromere in ensuring correct chromosome alignment and segregation and is required for chromatin-induced microtubule stabilization and spindle assembly. Stimulates the mitotic kinase activity of aurkb/aurora-B in the CPC. Does not appear to exhibit anti-apoptotic activity. The chain is Baculoviral IAP repeat-containing protein 5.1-A (birc5.1-a) from Xenopus laevis (African clawed frog).